We begin with the raw amino-acid sequence, 301 residues long: MVVTFQHVPVMVAEVVAALAPRPGGRYIDATVGGGGHALAVLQAARPGGRLLGIDADPAALVATADRLAEAGLREHAVLCHGSFADLAVIAGETGFINVDGILFDLGVSSYQLDTPERGFSFAADGPLDMRLDPTQGPTAADLVNTLSERELADVIFQYGEEHAARRIARAIVERRRTQPFQRTADLAAVIARVVGGRRGRIHPATRTFQALRIAVNRELDRLAAALPQAVHLLAPGGRLVVISFHSLEDRIVKQFMRAEAEGATPRLVINTKKPVAATDDEVATNPRARSAKLRVATRIV.

Residues 35-37 (GGH), Asp-55, Phe-84, Asp-105, and Gln-112 each bind S-adenosyl-L-methionine.

The protein belongs to the methyltransferase superfamily. RsmH family.

The protein resides in the cytoplasm. It carries out the reaction cytidine(1402) in 16S rRNA + S-adenosyl-L-methionine = N(4)-methylcytidine(1402) in 16S rRNA + S-adenosyl-L-homocysteine + H(+). In terms of biological role, specifically methylates the N4 position of cytidine in position 1402 (C1402) of 16S rRNA. The sequence is that of Ribosomal RNA small subunit methyltransferase H from Chloroflexus aggregans (strain MD-66 / DSM 9485).